A 198-amino-acid polypeptide reads, in one-letter code: MTLILASQSSGRAAMLRAAGLAFETTAAHVDEEMLTASLRAAGQTPRNIADALAEAKAVKIASRLPGVTVIGADSTLALDDGSMLAKPETPEEAADHLRRMAGRRHRLFSAAVAARDGAPIWRAIGEAKLWIRPLSDAFIADYVAQNWDSIRWTVGCYEIEGAGVQLFDRVEGDPWTIIGMPMLPLLTWLRATGLAPQ.

D74 functions as the Proton acceptor in the catalytic mechanism.

The protein belongs to the Maf family. A divalent metal cation serves as cofactor.

The protein localises to the cytoplasm. It catalyses the reaction a ribonucleoside 5'-triphosphate + H2O = a ribonucleoside 5'-phosphate + diphosphate + H(+). The catalysed reaction is a 2'-deoxyribonucleoside 5'-triphosphate + H2O = a 2'-deoxyribonucleoside 5'-phosphate + diphosphate + H(+). Nucleoside triphosphate pyrophosphatase. May have a dual role in cell division arrest and in preventing the incorporation of modified nucleotides into cellular nucleic acids. This chain is Nucleoside triphosphate pyrophosphatase, found in Sphingopyxis alaskensis (strain DSM 13593 / LMG 18877 / RB2256) (Sphingomonas alaskensis).